The chain runs to 297 residues: MMMQRTQLLLPLAMEATMLAQQQRGMATLKMISIRLKSVKNIQKITQSMKMVSAAKYARAERDLKAARPYGIGAQQFFEKTEIQPDEKAEPKKLLIAVTSDRGLCGAVHTGVARLIRGELAQDEANTKVFCVGDKSRAILSRLYGKNILMVANEVGRLPPTFLDASKIANEVLQTGYDYTEGKIVYNRFKSVVSYQCSTLPIFSGSTVEKSEKLAVYDSLDSDVVKSYLEFSLASLIFYTMKEGACSEQSSRMTAMDNASKNAGEMIDKLTLTFNRTRQAVITRELIEIISGAAALT.

This sequence belongs to the ATPase gamma chain family. In terms of assembly, F-type ATPases have 2 components, CF(1) - the catalytic core - and CF(0) - the membrane proton channel. CF(1) has five subunits: alpha(3), beta(3), gamma(1), delta(1), epsilon(1). CF(0) has three main subunits: a, b and c.

It is found in the mitochondrion. The protein resides in the mitochondrion inner membrane. Mitochondrial membrane ATP synthase (F(1)F(0) ATP synthase or Complex V) produces ATP from ADP in the presence of a proton gradient across the membrane which is generated by electron transport complexes of the respiratory chain. F-type ATPases consist of two structural domains, F(1) - containing the extramembraneous catalytic core, and F(0) - containing the membrane proton channel, linked together by a central stalk and a peripheral stalk. During catalysis, ATP synthesis in the catalytic domain of F(1) is coupled via a rotary mechanism of the central stalk subunits to proton translocation. Part of the complex F(1) domain and the central stalk which is part of the complex rotary element. The gamma subunit protrudes into the catalytic domain formed of alpha(3)beta(3). Rotation of the central stalk against the surrounding alpha(3)beta(3) subunits leads to hydrolysis of ATP in three separate catalytic sites on the beta subunits. The chain is ATP synthase subunit gamma, mitochondrial from Drosophila melanogaster (Fruit fly).